We begin with the raw amino-acid sequence, 577 residues long: External alternative NAD(P)H-ubiquinone oxidoreductase B1, mitochondrial (577 aa).

The N-terminal 35 residues, 1–35 (MRGFTYLSKVLHSHSSYSKLLVLCSVSTGGLLVYA), are a transit peptide targeting the mitochondrion. An FAD-binding site is contributed by 57 to 87 (RVVVLGTGWGGTSFLKDVDISSYDVQVVSPR). NAD(+) is bound at residue 221 to 257 (LHFVIVGGGPTGVEFAAELHDYVYEDLVKIYPSVKDF). The EF-hand domain occupies 378-413 (KVMEDISTIFEAADKDDSGTLSVEEFRDVLEDIIIR). Residues Asp391, Asp393, Ser395, Thr397, and Glu402 each contribute to the Ca(2+) site. A Microbody targeting signal motif is present at residues 568-577 (YIFGRDSSRI).

It belongs to the NADH dehydrogenase family. FAD is required as a cofactor.

It is found in the mitochondrion inner membrane. Its subcellular location is the peroxisome. It carries out the reaction a quinone + NADH + H(+) = a quinol + NAD(+). The catalysed reaction is a ubiquinone + NADH + H(+) = a ubiquinol + NAD(+). Activity is calcium-dependent with a more pronounced effect at higher pH. In terms of biological role, calcium-dependent NAD(P)H dehydrogenase. Binds calcium ions. Alternative NADH-ubiquinone oxidoreductase which catalyzes the oxidation of mitochondrial NADH does not translocate protons across the inner mitochondrial membrane. This chain is External alternative NAD(P)H-ubiquinone oxidoreductase B1, mitochondrial (NDB1), found in Solanum tuberosum (Potato).